A 78-amino-acid polypeptide reads, in one-letter code: Large ribosomal subunit protein bL28 (78 aa).

Residues 1–28 form a disordered region; sequence MSAICQVTGRQPGYGKSVSHSHRRTSRR.

It belongs to the bacterial ribosomal protein bL28 family.

This Corynebacterium diphtheriae (strain ATCC 700971 / NCTC 13129 / Biotype gravis) protein is Large ribosomal subunit protein bL28.